The sequence spans 252 residues: Small ribosomal subunit protein uS2 (252 aa).

The protein belongs to the universal ribosomal protein uS2 family.

The protein is Small ribosomal subunit protein uS2 of Chlorobium phaeobacteroides (strain DSM 266 / SMG 266 / 2430).